Reading from the N-terminus, the 391-residue chain is Elongation factor Tu (391 aa).

The tr-type G domain maps to 10–201 (KPHVNIGTIG…AVDSYIPTPE (192 aa)). The G1 stretch occupies residues 19–26 (GHVDHGKT). 19-26 (GHVDHGKT) is a GTP binding site. Thr-26 lines the Mg(2+) pocket. Positions 55–59 (GITIS) are G2. The tract at residues 76–79 (DCPG) is G3. GTP is bound by residues 76–80 (DCPGH) and 131–134 (NKCD). The interval 131 to 134 (NKCD) is G4. The interval 169–171 (SAL) is G5.

Belongs to the TRAFAC class translation factor GTPase superfamily. Classic translation factor GTPase family. EF-Tu/EF-1A subfamily. In terms of assembly, monomer.

Its subcellular location is the cytoplasm. The enzyme catalyses GTP + H2O = GDP + phosphate + H(+). Functionally, GTP hydrolase that promotes the GTP-dependent binding of aminoacyl-tRNA to the A-site of ribosomes during protein biosynthesis. The polypeptide is Elongation factor Tu (Brucella canis (strain ATCC 23365 / NCTC 10854 / RM-666)).